The primary structure comprises 188 residues: Nicotinamide-nucleotide adenylyltransferase (188 aa).

The protein belongs to the archaeal NMN adenylyltransferase family.

The protein localises to the cytoplasm. The enzyme catalyses beta-nicotinamide D-ribonucleotide + ATP + H(+) = diphosphate + NAD(+). Its pathway is cofactor biosynthesis; NAD(+) biosynthesis; NAD(+) from nicotinamide D-ribonucleotide: step 1/1. This Pyrococcus furiosus (strain ATCC 43587 / DSM 3638 / JCM 8422 / Vc1) protein is Nicotinamide-nucleotide adenylyltransferase.